We begin with the raw amino-acid sequence, 56 residues long: MASKGGREKIKLVSTAETGHFYTTTKNKKTMPEKMSIIKFDPKARKHVEYKEAKLK.

Belongs to the bacterial ribosomal protein bL33 family.

This chain is Large ribosomal subunit protein bL33, found in Acidovorax sp. (strain JS42).